Here is a 254-residue protein sequence, read N- to C-terminus: Countin-2 (254 aa).

Positions 1-19 are cleaved as a signal peptide; sequence MMIKYITIAILFIASLVKA. Positions 22–107 constitute a Saposin B-type domain; sequence QFSLCPTCVD…EELTVCPKNQ (86 aa). 3 disulfide bridges follow: cysteine 26-cysteine 103, cysteine 29-cysteine 97, and cysteine 56-cysteine 68. Residues asparagine 110 and asparagine 219 are each glycosylated (N-linked (GlcNAc...) asparagine). The tract at residues 231-254 is disordered; sequence QMTGTGSGSGSGSGSSSGAAYLRY. The segment covering 233–245 has biased composition (gly residues); that stretch reads TGTGSGSGSGSGS.

The protein belongs to the countin family.

It is found in the secreted. Cell-counting factor that limits the minimum size of the multicellular structure. May up-regulate the expression of both gp24 and gp80, which mediate cell adhesion. This Dictyostelium discoideum (Social amoeba) protein is Countin-2 (ctnB).